The following is a 585-amino-acid chain: Arginine--tRNA ligase (585 aa).

The 'HIGH' region motif lies at 126–136 (PNIAKEMHVGH).

Belongs to the class-I aminoacyl-tRNA synthetase family. Monomer.

Its subcellular location is the cytoplasm. The catalysed reaction is tRNA(Arg) + L-arginine + ATP = L-arginyl-tRNA(Arg) + AMP + diphosphate. The protein is Arginine--tRNA ligase of Cyanothece sp. (strain PCC 7425 / ATCC 29141).